The sequence spans 280 residues: Probable endonuclease lcl3 (280 aa).

A helical transmembrane segment spans residues T50–F67. The 169-residue stretch at R89 to G257 folds into the TNase-like domain. R140 is an active-site residue. Residue D145 coordinates Ca(2+). Catalysis depends on residues E148 and R188.

Belongs to the LCL3 family.

The protein resides in the mitochondrion. It localises to the membrane. The chain is Probable endonuclease lcl3 (lcl3) from Emericella nidulans (strain FGSC A4 / ATCC 38163 / CBS 112.46 / NRRL 194 / M139) (Aspergillus nidulans).